A 145-amino-acid chain; its full sequence is Protein BUD31 homolog 2 (145 aa).

The protein belongs to the BUD31 (G10) family.

The protein localises to the nucleus. The chain is Protein BUD31 homolog 2 from Oryza sativa subsp. japonica (Rice).